The following is a 230-amino-acid chain: NAD-dependent protein deacylase 1 (230 aa).

The Deacetylase sirtuin-type domain occupies 1–226; sequence MESGIPTYRE…SHLSAFLSRE (226 aa). Positions 41 and 44 each coordinate substrate. Position 75–78 (75–78) interacts with NAD(+); that stretch reads QNID. His93 functions as the Proton acceptor in the catalytic mechanism. Residues Cys101, Cys104, Cys128, and Cys131 each contribute to the Zn(2+) site. NAD(+) is bound by residues 168–170, 194–196, and Ala212; these read GTS and NTV.

Belongs to the sirtuin family. Class III subfamily. The cofactor is Zn(2+).

Its subcellular location is the cytoplasm. It carries out the reaction N(6)-acetyl-L-lysyl-[protein] + NAD(+) + H2O = 2''-O-acetyl-ADP-D-ribose + nicotinamide + L-lysyl-[protein]. The enzyme catalyses N(6)-succinyl-L-lysyl-[protein] + NAD(+) + H2O = 2''-O-succinyl-ADP-D-ribose + nicotinamide + L-lysyl-[protein]. Its function is as follows. NAD-dependent lysine deacetylase and desuccinylase that specifically removes acetyl and succinyl groups on target proteins. Modulates the activities of several proteins which are inactive in their acylated form. This Pseudomonas syringae pv. tomato (strain ATCC BAA-871 / DC3000) protein is NAD-dependent protein deacylase 1.